The primary structure comprises 1353 residues: Adenylate cyclase type 9 (1353 aa).

2 disordered regions span residues 1–27 (MASP…DSNS) and 49–71 (SISS…GGGG). The Cytoplasmic segment spans residues 1-117 (MASPPHQQLL…CFPQTQRRFR (117 aa)). Residues 16-27 (EVSCDSSGDSNS) are compositionally biased toward polar residues. A compositionally biased stretch (low complexity) spans 49 to 66 (SISSSCSSSGDSGGVPRR). A helical membrane pass occupies residues 118–138 (YALFYIGFACLLWSIYFAVHM). At 139-141 (RSR) the chain is on the extracellular side. Residues 142-162 (LIVMVAPALCFLLVCVGFFLF) traverse the membrane as a helical segment. At 163 to 171 (TFTKLYARH) the chain is on the cytoplasmic side. A helical transmembrane segment spans residues 172–192 (YAWTSLALTLLVFALTLAAQF). Over 193–215 (QVLTPVSGRGDSSNLTATARPTD) the chain is Extracellular. Residue Asn206 is glycosylated (N-linked (GlcNAc...) asparagine). Residues 216–235 (TCLSQVGSFSMCIEVLFLLY) form a helical membrane-spanning segment. Over 236 to 241 (TVMHLP) the chain is Cytoplasmic. Residues 242-259 (LYLSLCLGVAYSVLFETF) traverse the membrane as a helical segment. Topologically, residues 260-280 (GYHFRDEACFPSPGAGALHWE) are extracellular. The helical transmembrane segment at 281–301 (LLSRGLLHGCIHAIGVHLFVM) threads the bilayer. Over 302 to 786 (SQVRSRSTFL…VKTFASPTFS (485 aa)) the chain is Cytoplasmic. Positions 349 to 375 (QGDEESENSVKRHATSSPKNRKKKSSI) are disordered. The span at 359–374 (KRHATSSPKNRKKKSS) shows a compositional bias: basic residues. A Guanylate cyclase 1 domain is found at 394-521 (SILFADIVGF…NDVNLANLME (128 aa)). Residues Asp399, Ile400, and Asp443 each contribute to the Mg(2+) site. Residues 399 to 404 (DIVGFT), 441 to 443 (LGD), and Arg487 each bind ATP. Ser610 is subject to Phosphoserine. Positions 642 to 684 (EAGAEGGAPQNGCQDEHKNSTKASGGPNPKTQNGLLSPPQEEK) are disordered. Phosphoserine occurs at positions 688, 691, and 706. Residues 787 to 807 (SLLDVFLSTTVFLTLSTTCFL) traverse the membrane as a helical segment. Topologically, residues 808 to 818 (KYEAATVPPPP) are extracellular. The helical transmembrane segment at 819–839 (AALAVFSAALLLEVLSLAVSI) threads the bilayer. Topologically, residues 840 to 867 (RMVFFLEDVMACTKRLLEWIAGWLPRHC) are cytoplasmic. The chain crosses the membrane as a helical span at residues 868–888 (IGAILVSLPALAVYSHVTSEY). Residues 889 to 891 (ETN) lie on the Extracellular side of the membrane. The chain crosses the membrane as a helical span at residues 892–912 (IHFPVFTGSAALIAVVHYCNF). Topologically, residues 913–920 (CQLSSWMR) are cytoplasmic. The chain crosses the membrane as a helical span at residues 921–941 (SSLATVVGAGPLLLLYVSLCP). Topologically, residues 942 to 975 (DSSVLTSPLDAVQNFSSERNPCNSSVPRDLRRPA) are extracellular. N-linked (GlcNAc...) asparagine glycans are attached at residues Asn955 and Asn964. Residues 976–996 (SLIGQEVVLVFFLLLLLVWFL) form a helical membrane-spanning segment. Residues 997 to 1353 (NREFEVSYRL…LTKLNVSKSV (357 aa)) are Cytoplasmic-facing. Positions 1058–1198 (GVIFASIVNF…DTVNIASRMD (141 aa)) constitute a Guanylate cyclase 2 domain. ATP is bound by residues Lys1108, 1185–1187 (DIW), 1192–1196 (NIASR), and Lys1232. Ser1257, Ser1259, Ser1295, and Ser1307 each carry phosphoserine. Residues 1292-1301 (SLGSDSSTQA) are compositionally biased toward polar residues. The tract at residues 1292–1326 (SLGSDSSTQAKDAHLSPKRPWKEPVKAEERGRFGK) is disordered. Positions 1302–1326 (KDAHLSPKRPWKEPVKAEERGRFGK) are enriched in basic and acidic residues.

This sequence belongs to the adenylyl cyclase class-4/guanylyl cyclase family. It depends on Mg(2+) as a cofactor. Mn(2+) serves as cofactor. Detected in skeletal muscle, pancreas, lung, heart, kidney, liver, brain and placenta. Expressed in multiple cells of the lung, with expression highest in airway smooth muscle.

Its subcellular location is the cell membrane. It carries out the reaction ATP = 3',5'-cyclic AMP + diphosphate. Insensitive to calcium/calmodulin, forskolin and somatostatin. Stimulated by beta-adrenergic receptor activation. Activity is down-regulated by calcium/calcineurin. Adenylyl cyclase that catalyzes the formation of the signaling molecule cAMP in response to activation of G protein-coupled receptors. Contributes to signaling cascades activated by CRH (corticotropin-releasing factor), corticosteroids and beta-adrenergic receptors. This Homo sapiens (Human) protein is Adenylate cyclase type 9 (ADCY9).